The sequence spans 449 residues: UDP-glycosyltransferase 76E7 (449 aa).

Residues serine 275, 333-335, 350-358, and 372-375 contribute to the UDP-alpha-D-glucose site; these read APQ, HCGWNSTLE, and TTDQ.

Belongs to the UDP-glycosyltransferase family.

This is UDP-glycosyltransferase 76E7 (UGT76E7) from Arabidopsis thaliana (Mouse-ear cress).